A 475-amino-acid polypeptide reads, in one-letter code: Ribulose bisphosphate carboxylase large chain (475 aa).

Positions 1–2 (MS) are excised as a propeptide. Proline 3 carries the post-translational modification N-acetylproline. Lysine 14 carries the N6,N6,N6-trimethyllysine modification. Residues asparagine 123 and threonine 173 each coordinate substrate. Lysine 175 serves as the catalytic Proton acceptor. Substrate is bound at residue lysine 177. Mg(2+)-binding residues include lysine 201, aspartate 203, and glutamate 204. Lysine 201 carries the N6-carboxylysine modification. The active-site Proton acceptor is the histidine 294. Residues arginine 295, histidine 327, and serine 379 each coordinate substrate.

Belongs to the RuBisCO large chain family. Type I subfamily. In terms of assembly, heterohexadecamer of 8 large chains and 8 small chains; disulfide-linked. The disulfide link is formed within the large subunit homodimers. Mg(2+) is required as a cofactor. In terms of processing, the disulfide bond which can form in the large chain dimeric partners within the hexadecamer appears to be associated with oxidative stress and protein turnover.

Its subcellular location is the plastid. The protein resides in the chloroplast. It carries out the reaction 2 (2R)-3-phosphoglycerate + 2 H(+) = D-ribulose 1,5-bisphosphate + CO2 + H2O. The catalysed reaction is D-ribulose 1,5-bisphosphate + O2 = 2-phosphoglycolate + (2R)-3-phosphoglycerate + 2 H(+). RuBisCO catalyzes two reactions: the carboxylation of D-ribulose 1,5-bisphosphate, the primary event in carbon dioxide fixation, as well as the oxidative fragmentation of the pentose substrate in the photorespiration process. Both reactions occur simultaneously and in competition at the same active site. This is Ribulose bisphosphate carboxylase large chain from Zygnema circumcarinatum (Green alga).